The sequence spans 71 residues: Exodeoxyribonuclease 7 small subunit (71 aa).

The protein belongs to the XseB family. Heterooligomer composed of large and small subunits.

Its subcellular location is the cytoplasm. The catalysed reaction is Exonucleolytic cleavage in either 5'- to 3'- or 3'- to 5'-direction to yield nucleoside 5'-phosphates.. In terms of biological role, bidirectionally degrades single-stranded DNA into large acid-insoluble oligonucleotides, which are then degraded further into small acid-soluble oligonucleotides. The chain is Exodeoxyribonuclease 7 small subunit from Streptococcus agalactiae serotype Ia (strain ATCC 27591 / A909 / CDC SS700).